The primary structure comprises 247 residues: 5'-nucleotidase SurE (247 aa).

Residues Asp-8, Asp-9, Ser-39, and Asn-95 each coordinate a divalent metal cation.

This sequence belongs to the SurE nucleotidase family. Requires a divalent metal cation as cofactor.

The protein resides in the cytoplasm. It carries out the reaction a ribonucleoside 5'-phosphate + H2O = a ribonucleoside + phosphate. Functionally, nucleotidase that shows phosphatase activity on nucleoside 5'-monophosphates. In Thermotoga petrophila (strain ATCC BAA-488 / DSM 13995 / JCM 10881 / RKU-1), this protein is 5'-nucleotidase SurE.